Consider the following 269-residue polypeptide: Tungstate-binding protein TupA (269 aa).

A signal peptide spans 1-17 (MKKIISLALALALSASA).

As to quaternary structure, the complex is composed of two ATP-binding proteins (TupC), two transmembrane proteins (TupB) and a solute-binding protein (TupA).

The protein resides in the periplasm. In terms of biological role, part of an ABC transporter complex involved in ultra-high affinity tungstate uptake. Specifically binds tungstate. In Campylobacter jejuni subsp. jejuni serotype O:2 (strain ATCC 700819 / NCTC 11168), this protein is Tungstate-binding protein TupA.